The following is a 219-amino-acid chain: Holliday junction branch migration complex subunit RuvA (219 aa).

The interval 1–67 (MIGWLRGERI…DDGSSLFGFP (67 aa)) is domain I. Residues 68-146 (DRRERDLFRV…AWSAEKNSDH (79 aa)) are domain II. The tract at residues 147 to 161 (SDLSLVDRSDLKSLP) is flexible linker. Residues 162–219 (IEPDPLQDLQLTLSTLGYEDLEIRRAMRAVATGEEVPAANDGDGWLRASLRWLNRPSA) form a domain III region.

Belongs to the RuvA family. In terms of assembly, homotetramer. Forms an RuvA(8)-RuvB(12)-Holliday junction (HJ) complex. HJ DNA is sandwiched between 2 RuvA tetramers; dsDNA enters through RuvA and exits via RuvB. An RuvB hexamer assembles on each DNA strand where it exits the tetramer. Each RuvB hexamer is contacted by two RuvA subunits (via domain III) on 2 adjacent RuvB subunits; this complex drives branch migration. In the full resolvosome a probable DNA-RuvA(4)-RuvB(12)-RuvC(2) complex forms which resolves the HJ.

It localises to the cytoplasm. Its function is as follows. The RuvA-RuvB-RuvC complex processes Holliday junction (HJ) DNA during genetic recombination and DNA repair, while the RuvA-RuvB complex plays an important role in the rescue of blocked DNA replication forks via replication fork reversal (RFR). RuvA specifically binds to HJ cruciform DNA, conferring on it an open structure. The RuvB hexamer acts as an ATP-dependent pump, pulling dsDNA into and through the RuvAB complex. HJ branch migration allows RuvC to scan DNA until it finds its consensus sequence, where it cleaves and resolves the cruciform DNA. The protein is Holliday junction branch migration complex subunit RuvA of Synechococcus sp. (strain CC9311).